We begin with the raw amino-acid sequence, 184 residues long: ATP synthase subunit b, chloroplastic (184 aa).

Residues 27–49 (FATNPINLSVVLGVLIFFGKGVL) form a helical membrane-spanning segment.

Belongs to the ATPase B chain family. F-type ATPases have 2 components, F(1) - the catalytic core - and F(0) - the membrane proton channel. F(1) has five subunits: alpha(3), beta(3), gamma(1), delta(1), epsilon(1). F(0) has four main subunits: a(1), b(1), b'(1) and c(10-14). The alpha and beta chains form an alternating ring which encloses part of the gamma chain. F(1) is attached to F(0) by a central stalk formed by the gamma and epsilon chains, while a peripheral stalk is formed by the delta, b and b' chains.

It localises to the plastid. Its subcellular location is the chloroplast thylakoid membrane. F(1)F(0) ATP synthase produces ATP from ADP in the presence of a proton or sodium gradient. F-type ATPases consist of two structural domains, F(1) containing the extramembraneous catalytic core and F(0) containing the membrane proton channel, linked together by a central stalk and a peripheral stalk. During catalysis, ATP synthesis in the catalytic domain of F(1) is coupled via a rotary mechanism of the central stalk subunits to proton translocation. In terms of biological role, component of the F(0) channel, it forms part of the peripheral stalk, linking F(1) to F(0). The polypeptide is ATP synthase subunit b, chloroplastic (Ipomoea purpurea (Common morning glory)).